We begin with the raw amino-acid sequence, 364 residues long: Pre-small/secreted glycoprotein (364 aa).

The signal sequence occupies residues 1–32; that stretch reads MGVTGILQLPRDRFKRTSFFLWVIILFQRTFS. A glycan (N-linked (GlcNAc...) asparagine; by host) is linked at Asn-40. Disulfide bonds link Cys-108-Cys-135 and Cys-121-Cys-147. Residues Asn-204, Asn-228, Asn-238, Asn-257, and Asn-268 are each glycosylated (N-linked (GlcNAc...) asparagine; by host).

This sequence belongs to the filoviruses glycoprotein family. As to quaternary structure, homodimer; disulfide-linked. The homodimers are linked by two disulfide bonds in a parallel orientation. In terms of assembly, monomer. Post-translationally, this precursor is processed into mature sGP and delta-peptide by host furin or furin-like proteases. The cleavage site corresponds to the furin optimal cleavage sequence [KR]-X-[KR]-R. N-glycosylated. In terms of processing, O-glycosylated.

It localises to the secreted. In terms of biological role, seems to possess an anti-inflammatory activity as it can reverse the barrier-decreasing effects of TNF alpha. Might therefore contribute to the lack of inflammatory reaction seen during infection in spite the of extensive necrosis and massive virus production. Does not seem to be involved in activation of primary macrophages. Does not seem to interact specifically with neutrophils. Functionally, viroporin that permeabilizes mammalian cell plasma membranes. It acts by altering permeation of ionic compounds and small molecules. This activity may lead to viral enterotoxic activity. The sequence is that of Pre-small/secreted glycoprotein (GP) from Zaire ebolavirus (strain Eckron-76) (ZEBOV).